We begin with the raw amino-acid sequence, 507 residues long: Carboxypeptidase sxa2 (507 aa).

An N-terminal signal peptide occupies residues 1-22 (MLSLFLKSLFAIIIIELTIIHA). N-linked (GlcNAc...) asparagine glycosylation is found at asparagine 38 and asparagine 45. Residues 41–64 (SASSNQTVQPRQHAAPSSDRIKSL) form a disordered region. Residue serine 200 is part of the active site. Asparagine 259, asparagine 260, and asparagine 300 each carry an N-linked (GlcNAc...) asparagine glycan. Residue aspartate 434 is part of the active site. Asparagine 448 carries an N-linked (GlcNAc...) asparagine glycan. Histidine 487 is an active-site residue.

It belongs to the peptidase S10 family.

It is found in the secreted. Involved in degradation or processing of the mating pheromones. Its loss causes a persistent response to the pheromones. It may be required for stabilization of enzymes that are essential for zygote formation. May degrade the mating pheromone P-factor. This chain is Carboxypeptidase sxa2 (sxa2), found in Schizosaccharomyces pombe (strain 972 / ATCC 24843) (Fission yeast).